An 853-amino-acid chain; its full sequence is EF-hand domain-containing family member B (853 aa).

2 disordered regions span residues 1-31 (MCSFVRVGSPKPLQTSASPLEMSSLRRTRAP) and 244-266 (AQQPEEKKEPGSTEPGVEPPGNI). 2 EF-hand domains span residues 581–616 (QNFDTLQVAFRHYDKKGDGVIDRAELHEACVQANLH) and 617–652 (LDKMLLDHLFDYCDVDQDGLINYLEFANFLNWKDRI). Positions 594, 598, 605, 630, 632, 634, and 641 each coordinate Ca(2+).

In terms of assembly, microtubule inner protein component of sperm flagellar doublet microtubules. Interacts with STIM1 and ORAI1; the interactions take place upon Ca(2+)-store depletion and dissociate through a Ca(2+)-dependent mechanism. Interaction with STIM1 inhibits STIM1 interaction with SARAF.

The protein localises to the cytoplasm. It is found in the cytoskeleton. The protein resides in the cilium axoneme. It localises to the flagellum axoneme. In terms of biological role, microtubule inner protein (MIP) part of the dynein-decorated doublet microtubules (DMTs) in cilia axoneme, which is required for motile cilia beating. Cytosolic sensor for calcium, modulates the interaction of STIM1 and ORAI1 upon store depletion and the activation of store-operated Ca(2+) entry (SOCE) and NFAT translocation from cytosol to nucleus. This chain is EF-hand domain-containing family member B, found in Mus musculus (Mouse).